A 283-amino-acid polypeptide reads, in one-letter code: Elongation factor Ts (283 aa).

The tract at residues 80–83 (TDFV) is involved in Mg(2+) ion dislocation from EF-Tu.

Belongs to the EF-Ts family.

It localises to the cytoplasm. Its function is as follows. Associates with the EF-Tu.GDP complex and induces the exchange of GDP to GTP. It remains bound to the aminoacyl-tRNA.EF-Tu.GTP complex up to the GTP hydrolysis stage on the ribosome. In Haemophilus influenzae (strain PittEE), this protein is Elongation factor Ts.